A 931-amino-acid polypeptide reads, in one-letter code: Beta-mannosidase A (931 aa).

The first 21 residues, 1–21 (MRHSIGLAAALLAPTLPVALG), serve as a signal peptide directing secretion. 7 N-linked (GlcNAc...) asparagine glycosylation sites follow: N40, N79, N247, N282, N316, N326, and N347. Residue E479 is the Proton donor of the active site. N-linked (GlcNAc...) asparagine glycans are attached at residues N550, N608, N658, N738, N790, N798, N830, and N918.

The protein belongs to the glycosyl hydrolase 2 family. Beta-mannosidase A subfamily. In terms of assembly, homodimer.

The protein localises to the secreted. It carries out the reaction Hydrolysis of terminal, non-reducing beta-D-mannose residues in beta-D-mannosides.. Its pathway is glycan metabolism; N-glycan degradation. Its function is as follows. Exoglycosidase that cleaves the single beta-linked mannose residue from the non-reducing end of beta-mannosidic oligosaccharides of various complexity and length. Involved in the degradation of polymeric mannan and galactomannan. In Aspergillus niger (strain ATCC MYA-4892 / CBS 513.88 / FGSC A1513), this protein is Beta-mannosidase A (mndA).